Reading from the N-terminus, the 252-residue chain is Flagellar L-ring protein (252 aa).

Positions 1 to 25 (MLKLASLNRIVLTGTLLAAAGLASG) are cleaved as a signal peptide. Cysteine 26 is lipidated: N-palmitoyl cysteine. A lipid anchor (S-diacylglycerol cysteine) is attached at cysteine 26.

This sequence belongs to the FlgH family. In terms of assembly, the basal body constitutes a major portion of the flagellar organelle and consists of four rings (L,P,S, and M) mounted on a central rod.

Its subcellular location is the cell outer membrane. The protein resides in the bacterial flagellum basal body. Its function is as follows. Assembles around the rod to form the L-ring and probably protects the motor/basal body from shearing forces during rotation. This is Flagellar L-ring protein from Nitrobacter winogradskyi (strain ATCC 25391 / DSM 10237 / CIP 104748 / NCIMB 11846 / Nb-255).